Reading from the N-terminus, the 307-residue chain is HPr kinase/phosphorylase (307 aa).

Active-site residues include histidine 136 and lysine 157. 151–158 (GESGIGKS) is an ATP binding site. Serine 158 provides a ligand contact to Mg(2+). Residue aspartate 175 is the Proton acceptor; for phosphorylation activity. Proton donor; for dephosphorylation activity of the active site. The tract at residues 198–207 (LEVRGMGIID) is important for the catalytic mechanism of both phosphorylation and dephosphorylation. Glutamate 199 provides a ligand contact to Mg(2+). Residue arginine 240 is part of the active site. The interval 261–266 (PIRPGR) is important for the catalytic mechanism of dephosphorylation.

This sequence belongs to the HPrK/P family. In terms of assembly, homohexamer. It depends on Mg(2+) as a cofactor.

The enzyme catalyses [HPr protein]-L-serine + ATP = [HPr protein]-O-phospho-L-serine + ADP + H(+). It carries out the reaction [HPr protein]-O-phospho-L-serine + phosphate + H(+) = [HPr protein]-L-serine + diphosphate. Functionally, catalyzes the ATP- as well as the pyrophosphate-dependent phosphorylation of a specific serine residue in HPr, a phosphocarrier protein of the phosphoenolpyruvate-dependent sugar phosphotransferase system (PTS). HprK/P also catalyzes the pyrophosphate-producing, inorganic phosphate-dependent dephosphorylation (phosphorolysis) of seryl-phosphorylated HPr (P-Ser-HPr). The two antagonistic activities of HprK/P are regulated by several intracellular metabolites, which change their concentration in response to the absence or presence of rapidly metabolisable carbon sources (glucose, fructose, etc.) in the growth medium. Therefore, by controlling the phosphorylation state of HPr, HPrK/P is a sensor enzyme that plays a major role in the regulation of carbon metabolism and sugar transport: it mediates carbon catabolite repression (CCR), and regulates PTS-catalyzed carbohydrate uptake and inducer exclusion. In Clostridium perfringens (strain 13 / Type A), this protein is HPr kinase/phosphorylase.